Consider the following 833-residue polypeptide: Leucine--tRNA ligase (833 aa).

The 'HIGH' region motif lies at 41 to 52; that stretch reads PYPSGAGLHVGH. Residues 610–614 carry the 'KMSKS' region motif; sequence KMSKS. Lysine 613 serves as a coordination point for ATP.

It belongs to the class-I aminoacyl-tRNA synthetase family.

Its subcellular location is the cytoplasm. It catalyses the reaction tRNA(Leu) + L-leucine + ATP = L-leucyl-tRNA(Leu) + AMP + diphosphate. The sequence is that of Leucine--tRNA ligase from Streptococcus pyogenes serotype M49 (strain NZ131).